A 474-amino-acid chain; its full sequence is Sestrin homolog (474 aa).

It belongs to the sestrin family.

It is found in the nucleus. The protein resides in the cytoplasm. May function as a negative feedback regulator of TOR function. The protein is Sestrin homolog of Caenorhabditis elegans.